The following is a 443-amino-acid chain: Tol-Pal system protein TolB (443 aa).

The signal sequence occupies residues methionine 1–alanine 33.

It belongs to the TolB family. As to quaternary structure, the Tol-Pal system is composed of five core proteins: the inner membrane proteins TolA, TolQ and TolR, the periplasmic protein TolB and the outer membrane protein Pal. They form a network linking the inner and outer membranes and the peptidoglycan layer.

It localises to the periplasm. In terms of biological role, part of the Tol-Pal system, which plays a role in outer membrane invagination during cell division and is important for maintaining outer membrane integrity. In Brucella ovis (strain ATCC 25840 / 63/290 / NCTC 10512), this protein is Tol-Pal system protein TolB.